A 162-amino-acid polypeptide reads, in one-letter code: Beta-lactoglobulin (162 aa).

3 disulfide bridges follow: Cys-66–Cys-160, Cys-106–Cys-119, and Cys-106–Cys-121.

Belongs to the calycin superfamily. Lipocalin family. As to quaternary structure, under physiological conditions beta-lactoglobulin exists as an equilibrium mixture of monomeric and dimeric forms. Post-translationally, alternate disulfide bonds occur in equal amounts.

The protein localises to the secreted. Functionally, lactoglobulin is the primary component of whey, it binds retinol and is probably involved in the transport of that molecule. This is Beta-lactoglobulin (LGB) from Ovis aries musimon (Mouflon).